The chain runs to 456 residues: NADH-quinone oxidoreductase subunit N (456 aa).

Helical transmembrane passes span 6 to 26, 45 to 65, 75 to 95, 97 to 117, 118 to 138, 151 to 171, 181 to 201, 220 to 240, 252 to 272, 281 to 301, 308 to 328, 355 to 375, 382 to 402, and 426 to 446; these read LFAL…MLLA, VAAL…GALF, TAYA…AGVA, EAPA…GAGH, AATL…LFAF, FLVM…LIYA, WVGH…GLAF, PAGA…IAIL, LWSA…NVLA, MLGY…ASGA, VLFY…ASAM, GLLS…LYLF, ESWI…YYYI, and LLLI…LVLI.

It belongs to the complex I subunit 2 family. As to quaternary structure, NDH-1 is composed of 14 different subunits. Subunits NuoA, H, J, K, L, M, N constitute the membrane sector of the complex.

It is found in the cell inner membrane. The catalysed reaction is a quinone + NADH + 5 H(+)(in) = a quinol + NAD(+) + 4 H(+)(out). In terms of biological role, NDH-1 shuttles electrons from NADH, via FMN and iron-sulfur (Fe-S) centers, to quinones in the respiratory chain. The immediate electron acceptor for the enzyme in this species is believed to be ubiquinone. Couples the redox reaction to proton translocation (for every two electrons transferred, four hydrogen ions are translocated across the cytoplasmic membrane), and thus conserves the redox energy in a proton gradient. The chain is NADH-quinone oxidoreductase subunit N from Rhodopseudomonas palustris (strain BisA53).